Here is a 156-residue protein sequence, read N- to C-terminus: Snaclec A11 (156 aa).

An N-terminal signal peptide occupies residues 1-23; it reads MGRSISVSFGLLVVFLSLSGTGA. Disulfide bonds link C27-C38, C55-C154, and C129-C146. Residues 34–155 enclose the C-type lectin domain; the sequence is YDQHCYQAVD…CGQPYRFTCE (122 aa).

The protein belongs to the snaclec family. Heterodimer; disulfide-linked. As to expression, expressed by the venom gland.

The protein resides in the secreted. Functionally, interferes with one step of hemostasis (modulation of platelet aggregation, or coagulation cascade, for example). The polypeptide is Snaclec A11 (Macrovipera lebetinus (Levantine viper)).